A 128-amino-acid polypeptide reads, in one-letter code: uncharacterized protein (128 aa).

This is an uncharacterized protein from Mycobacterium tuberculosis (strain CDC 1551 / Oshkosh).